A 502-amino-acid polypeptide reads, in one-letter code: Lysine--tRNA ligase (502 aa).

Residues E403 and E410 each coordinate Mg(2+).

The protein belongs to the class-II aminoacyl-tRNA synthetase family. Homodimer. Mg(2+) serves as cofactor.

Its subcellular location is the cytoplasm. The catalysed reaction is tRNA(Lys) + L-lysine + ATP = L-lysyl-tRNA(Lys) + AMP + diphosphate. The chain is Lysine--tRNA ligase from Synechococcus sp. (strain CC9902).